We begin with the raw amino-acid sequence, 93 residues long: Small ribosomal subunit protein uS19 (93 aa).

It belongs to the universal ribosomal protein uS19 family.

Its function is as follows. Protein S19 forms a complex with S13 that binds strongly to the 16S ribosomal RNA. In Clostridioides difficile (strain 630) (Peptoclostridium difficile), this protein is Small ribosomal subunit protein uS19.